An 83-amino-acid polypeptide reads, in one-letter code: Blackelin-5 (83 aa).

The signal sequence occupies residues 1-24 (MSSGGLLLLLGLLTLWEGLTPVSS). The 51-residue stretch at 31-81 (CELPADSGSCKGNFQAFYYHPVHRTCLEFIYGGCEGNANNFKTIDECKRTC) folds into the BPTI/Kunitz inhibitor domain. Cystine bridges form between Cys31/Cys81, Cys40/Cys64, and Cys56/Cys77.

The protein resides in the secreted. Serine protease inhibitor. This Pseudechis porphyriacus (Red-bellied black snake) protein is Blackelin-5.